Here is a 305-residue protein sequence, read N- to C-terminus: Ribosomal protein L11 methyltransferase (305 aa).

Positions 152, 173, 195, and 237 each coordinate S-adenosyl-L-methionine.

This sequence belongs to the methyltransferase superfamily. PrmA family.

It is found in the cytoplasm. It catalyses the reaction L-lysyl-[protein] + 3 S-adenosyl-L-methionine = N(6),N(6),N(6)-trimethyl-L-lysyl-[protein] + 3 S-adenosyl-L-homocysteine + 3 H(+). Functionally, methylates ribosomal protein L11. The polypeptide is Ribosomal protein L11 methyltransferase (Hamiltonella defensa subsp. Acyrthosiphon pisum (strain 5AT)).